The chain runs to 365 residues: Aminomethyltransferase (365 aa).

This sequence belongs to the GcvT family. As to quaternary structure, the glycine cleavage system is composed of four proteins: P, T, L and H.

It carries out the reaction N(6)-[(R)-S(8)-aminomethyldihydrolipoyl]-L-lysyl-[protein] + (6S)-5,6,7,8-tetrahydrofolate = N(6)-[(R)-dihydrolipoyl]-L-lysyl-[protein] + (6R)-5,10-methylene-5,6,7,8-tetrahydrofolate + NH4(+). The glycine cleavage system catalyzes the degradation of glycine. The protein is Aminomethyltransferase of Halalkalibacterium halodurans (strain ATCC BAA-125 / DSM 18197 / FERM 7344 / JCM 9153 / C-125) (Bacillus halodurans).